The sequence spans 1302 residues: Multidrug resistance protein 1 (1302 aa).

The chain crosses the membrane as a helical span at residues 43 to 63 (GVFEIILLIIGIIGSIGVGCL). The region spanning 51–360 (IIGIIGSIGV…ISTPINILNS (310 aa)) is the ABC transmembrane type-1 1 domain. An N-linked (GlcNAc...) asparagine glycan is attached at Asn-83. 5 helical membrane passes run 118 to 138 (LYFAIGNMVAGFLQTICFFVL), 192 to 212 (LFQTFSSFITGYLIGFIKCWD), 213 to 233 (LTLVVLCMFPFIMVSMMGLGM), 292 to 312 (IGIGTGLGCMMFFIMSSNALG), and 331 to 351 (AGTVLTVFMSVLLATQSLSQI). Residues 395–634 (IRFEDVQFVY…KGTYYGLVKR (240 aa)) enclose the ABC transporter 1 domain. Residue 430–437 (GASGCGKS) coordinates ATP. The N-linked (GlcNAc...) asparagine glycan is linked to Asn-663. A helical transmembrane segment spans residues 712 to 732 (YIFCTLGLIGGIGAGAAFPFY). The ABC transmembrane type-1 2 domain maps to 713–1022 (IFCTLGLIGG…IGNVLPDVGK (310 aa)). Asn-751 is a glycosylation site (N-linked (GlcNAc...) asparagine). The helical transmembrane segment at 765-785 (MIIICIGIITMISFFCYVGLF) threads the bilayer. N-linked (GlcNAc...) asparagine glycosylation is present at Asn-808. Transmembrane regions (helical) follow at residues 841–861 (VGDIIEIMSTVGFGFGIGLYF) and 862–882 (SWKLSLCILAVFPIISFFMFI). The ABC transporter 2 domain maps to 1057 to 1296 (IEFKNIHFRY…KGFYYTLAMQ (240 aa)). Position 1092 to 1099 (1092 to 1099 (GASGCGKS)) interacts with ATP.

This sequence belongs to the ABC transporter superfamily. ABCB family. Multidrug resistance exporter (TC 3.A.1.201) subfamily.

It localises to the membrane. The enzyme catalyses ATP + H2O + xenobioticSide 1 = ADP + phosphate + xenobioticSide 2.. Energy-dependent efflux pump responsible for decreased drug accumulation in multidrug resistance parasites. The chain is Multidrug resistance protein 1 from Entamoeba histolytica (strain ATCC 30459 / HM-1:IMSS / ABRM).